Consider the following 702-residue polypeptide: Pseudouridylate synthase PUS7L (702 aa).

Serine 79 bears the Phosphoserine mark. Residues 84-116 (NSEGAADLPGCSDGDRSHQSDSEKENSVNSVTS) are disordered. A compositionally biased stretch (basic and acidic residues) spans 96 to 109 (DGDRSHQSDSEKEN). The active-site Nucleophile is aspartate 339. The region spanning 424–646 (GFVNYYGPQR…PGCYRHIVKH (223 aa)) is the TRUD domain.

It belongs to the pseudouridine synthase TruD family.

It carries out the reaction a uridine in mRNA = a pseudouridine in mRNA. Functionally, pseudouridine synthase that catalyzes pseudouridylation of mRNAs. In Mus musculus (Mouse), this protein is Pseudouridylate synthase PUS7L.